We begin with the raw amino-acid sequence, 298 residues long: MTDSHYIGRFAPSPSGELHFGSLIAALGSYLQARAQRGIWRVRIEDIDPPREVPGAAATILRQLEHYGLHWDGEVLWQSQRHEAYREALAWLHEQGLSYYCTCPRSRIQRLGGIYDGHCRTLCHGPENAAVRIKQQHPVMHFHDALRGDIQADPQLASEDFIIHRRDGLFAYNLAVVVDDHFQGVTEIVRGADLIEPTVRQLSLYKQFGWRAPGYVHLPLALNEQGAKLSKQNHAPALATGDPRPVLVQALRFLGQRDVVAWQEMSVEELLRFAVAHWRLTAVPTSANVNPAFSNASR.

Residues 9–13 (RFAPS) and E45 each bind L-glutamate. Positions 12–22 (PSPSGELHFGS) match the 'HIGH' region motif. Residues C101, C103, Y115, and C119 each coordinate Zn(2+). Residues Y172 and R190 each coordinate L-glutamate. Positions 228–232 (KLSKQ) match the 'KMSKS' region motif. An ATP-binding site is contributed by K231.

This sequence belongs to the class-I aminoacyl-tRNA synthetase family. GluQ subfamily. Zn(2+) serves as cofactor.

Catalyzes the tRNA-independent activation of glutamate in presence of ATP and the subsequent transfer of glutamate onto a tRNA(Asp). Glutamate is transferred on the 2-amino-5-(4,5-dihydroxy-2-cyclopenten-1-yl) moiety of the queuosine in the wobble position of the QUC anticodon. The protein is Glutamyl-Q tRNA(Asp) synthetase of Salmonella typhimurium (strain LT2 / SGSC1412 / ATCC 700720).